The primary structure comprises 417 residues: NADH-quinone oxidoreductase subunit D (417 aa).

Belongs to the complex I 49 kDa subunit family. As to quaternary structure, NDH-1 is composed of 14 different subunits. Subunits NuoB, C, D, E, F, and G constitute the peripheral sector of the complex.

The protein localises to the cell inner membrane. The enzyme catalyses a quinone + NADH + 5 H(+)(in) = a quinol + NAD(+) + 4 H(+)(out). Its function is as follows. NDH-1 shuttles electrons from NADH, via FMN and iron-sulfur (Fe-S) centers, to quinones in the respiratory chain. The immediate electron acceptor for the enzyme in this species is believed to be ubiquinone. Couples the redox reaction to proton translocation (for every two electrons transferred, four hydrogen ions are translocated across the cytoplasmic membrane), and thus conserves the redox energy in a proton gradient. This Methylibium petroleiphilum (strain ATCC BAA-1232 / LMG 22953 / PM1) protein is NADH-quinone oxidoreductase subunit D.